The primary structure comprises 419 residues: MRAEIIAVGTEILTGQIVNTNAQFLSEKMAELGIDIYFQTAVGDNEERLLSLLDIASQRSQLVILCGGLGPTEDDLTKQTLAKFLGKSLTVDLLASRKLDRFFASRPQFARTPNNERQAQLVEGSIPLQNLTGLAVGGIVTSKGVQYMVLPGPPSELKPMVMEQVVPILSNNGTKLYSRVLRFFGIGESQLVTILEDIIKNQTDPTIAPYAKVGEVTLRLSTKAENQDEADFKLDSLEKEILALKTLDNRKLKDLLYGYGDNNSMARTVLELLKVQNKTITAAESLTAGLFQSQLAEFSGASQVFNGGFTTYSMEAKSQLLGIPKKKLQEYGVVSHFTAEAMAQQARQLLKADFGIGLTGVAGPDELEGYPAGTVFIGIATPEGVSSIKVSIGGKSRSDVRHISTLHAFDLVRRALLKI.

It belongs to the CinA family.

The chain is Putative competence-damage inducible protein from Streptococcus agalactiae serotype III (strain NEM316).